The chain runs to 304 residues: Aspartate carbamoyltransferase catalytic subunit (304 aa).

Carbamoyl phosphate-binding residues include R53 and T54. Residue K82 participates in L-aspartate binding. Residues R103, H131, and Q134 each contribute to the carbamoyl phosphate site. L-aspartate contacts are provided by R163 and R224. Carbamoyl phosphate-binding residues include L263 and P264.

This sequence belongs to the aspartate/ornithine carbamoyltransferase superfamily. ATCase family. As to quaternary structure, heterooligomer of catalytic and regulatory chains.

It catalyses the reaction carbamoyl phosphate + L-aspartate = N-carbamoyl-L-aspartate + phosphate + H(+). It participates in pyrimidine metabolism; UMP biosynthesis via de novo pathway; (S)-dihydroorotate from bicarbonate: step 2/3. Functionally, catalyzes the condensation of carbamoyl phosphate and aspartate to form carbamoyl aspartate and inorganic phosphate, the committed step in the de novo pyrimidine nucleotide biosynthesis pathway. This is Aspartate carbamoyltransferase catalytic subunit from Haloarcula marismortui (strain ATCC 43049 / DSM 3752 / JCM 8966 / VKM B-1809) (Halobacterium marismortui).